The sequence spans 220 residues: Large ribosomal subunit protein uL3 (220 aa).

Residues 130–156 (AIKRHGQSRGPMSHGSHFHRAPGSVGM) form a disordered region.

Belongs to the universal ribosomal protein uL3 family. Part of the 50S ribosomal subunit. Forms a cluster with proteins L14 and L19.

Functionally, one of the primary rRNA binding proteins, it binds directly near the 3'-end of the 23S rRNA, where it nucleates assembly of the 50S subunit. The polypeptide is Large ribosomal subunit protein uL3 (Staphylococcus aureus (strain Mu3 / ATCC 700698)).